Consider the following 612-residue polypeptide: Zinc metalloproteinase-disintegrin-like 2d (612 aa).

An N-terminal signal peptide occupies residues 1–20 (MIQVLLVTICLAVFPYQGSS). The propeptide occupies 21 to 189 (IILGSGNVND…KKASQLNLTP (169 aa)). In terms of domain architecture, Peptidase M12B spans 199–395 (KYIELVIVAD…NRPPCILNKP (197 aa)). A Ca(2+)-binding site is contributed by Glu-202. An N-linked (GlcNAc...) asparagine glycan is attached at Asn-218. A Ca(2+)-binding site is contributed by Asp-286. Cystine bridges form between Cys-310–Cys-390, Cys-350–Cys-374, and Cys-352–Cys-357. His-335 contacts Zn(2+). Glu-336 is an active-site residue. Residues His-339 and His-345 each coordinate Zn(2+). 8 residues coordinate Ca(2+): Cys-390, Asn-393, Val-405, Asn-408, Phe-410, Glu-412, Glu-415, and Asp-418. One can recognise a Disintegrin domain in the interval 403–489 (PPVCGNYFVE…DCPTDNFQRN (87 aa)). Intrachain disulfides connect Cys-406–Cys-435, Cys-417–Cys-430, Cys-419–Cys-425, Cys-429–Cys-452, Cys-443–Cys-449, Cys-448–Cys-474, Cys-461–Cys-481, Cys-468–Cys-500, Cys-493–Cys-505, Cys-512–Cys-562, Cys-527–Cys-573, Cys-540–Cys-550, Cys-557–Cys-599, and Cys-593–Cys-605. A D/ECD-tripeptide motif is present at residues 467-469 (ECD).

It belongs to the venom metalloproteinase (M12B) family. P-III subfamily. Zn(2+) serves as cofactor. Expressed by the venom gland.

The protein resides in the secreted. In terms of biological role, snake venom metalloproteinase that impairs hemostasis in the envenomed animal. The protein is Zinc metalloproteinase-disintegrin-like 2d of Crotalus adamanteus (Eastern diamondback rattlesnake).